Here is a 240-residue protein sequence, read N- to C-terminus: MLADDRLIVALDVPNAVAGLALAERLGDAVSFYKIGLGMLTGGGLALANELKQEHGKRIFLDMKLFDIGNTVEAAVRGLSQFDLDFLTVHGDPHVVRAAKEGAAGKDLKILAVTILTSLNRDDLDASLIKPGDVHDLVLERAARAFEAGADGVIASPQEAAAIRALPEAAGRLIVTPGIRPAGADLGDQKRVATPANAIADGVDHIVVGRPVVHAPDPRAAALSILAEMTSPQAVAPNRS.

Substrate-binding positions include aspartate 12, lysine 34, aspartate 62–threonine 71, threonine 117, arginine 180, glutamine 189, glycine 209, and arginine 210. Lysine 64 acts as the Proton donor in catalysis.

It belongs to the OMP decarboxylase family. Type 1 subfamily. Homodimer.

It catalyses the reaction orotidine 5'-phosphate + H(+) = UMP + CO2. It functions in the pathway pyrimidine metabolism; UMP biosynthesis via de novo pathway; UMP from orotate: step 2/2. Catalyzes the decarboxylation of orotidine 5'-monophosphate (OMP) to uridine 5'-monophosphate (UMP). The polypeptide is Orotidine 5'-phosphate decarboxylase (Ruegeria pomeroyi (strain ATCC 700808 / DSM 15171 / DSS-3) (Silicibacter pomeroyi)).